Consider the following 963-residue polypeptide: MAGNDNWINSYLDAILDAGKAAIGGDRPSLLLRERGHFSPARYFVEEVITGYDETDLYKTWLRANAMRSPQERNTRLENMTWRIWNLARKKKEFEKEEACRLLKRQPEAEKLRTDTNADMSEDLFEGEKGEDAGDPSVAYGDSTTGSSPKTSSIDKLYIVLISLHGLVRGENMELGRDSDTGGQVKYVVELAKALSSSPGVYRVDLLTRQILAPNFDRSYGEPTEMLVSTSFKNSKQEKGENSGAYIIRIPFGPKDKYLAKEHLWPFIQEFVDGALGHIVRMSKTIGEEIGCGHPVWPAVIHGHYASAGIAAALLSGSLNIPMAFTGHFLGKDKLEGLLKQGRHSREQINMTYKIMCRIEAEELSLDASEIVIASTRQEIEEQWNLYDGFEVILARKLRARVKRGANCYGRYMPRMVIIPPGVEFGHIIHDFEMDGEEENPCPASEDPPIWSQIMRFFTNPRKPMILAVARPYPEKNITSLVKAFGECRPLRELANLTLIMGNREAISKMNNMSAAVLTSVLTLIDEYDLYGQVAYPKHHKHSEVPDIYRLAARTKGAFVNVAYFEQFGVTLIEAAMNGLPIIATKNGAPVEINQVLNNGLLVDPHDQNAIADALYKLLSDKQLWSRCRENGLKNIHQFSWPEHCKNYLSRILTLGPRSPAIGGKQEQKAPISGRKHIIVISVDSVNKEDLVRIIRNTIEVTRTEKMSGSTGFVLSTSLTISEIRSLLVSAGMLPTVFDAFICNSGSNIYYPLYSGDTPSSSQVTPAIDQNHQAHIEYRWGGEGLRKYLVKWATSVVERKGRIERQIIFEDPEHSSTYCLAFRVVNPNHLPPLKELRKLMRIQSLRCNALYNHSATRLSVVPIHASRSQALRYLCIRWGIELPNVAVLVGESGDSDYEELLGGLHRTVILKGEFNIPANRIHTVRRYPLQDVVALDSSNIIGIEGYSTDDMKSALQQIGVLTQ.

Residues 111 to 150 (KLRTDTNADMSEDLFEGEKGEDAGDPSVAYGDSTTGSSPK) are disordered.

The protein belongs to the glycosyltransferase 1 family. As to quaternary structure, homodimer or homotetramer. In terms of tissue distribution, expressed in germinating seeds.

It catalyses the reaction beta-D-fructose 6-phosphate + UDP-alpha-D-glucose = sucrose 6(F)-phosphate + UDP + H(+). Its pathway is glycan biosynthesis; sucrose biosynthesis; sucrose from D-fructose 6-phosphate and UDP-alpha-D-glucose: step 1/2. Activity is regulated by phosphorylation and moderated by concentration of metabolites and light. Its function is as follows. Plays a role in photosynthetic sucrose synthesis by catalyzing the rate-limiting step of sucrose biosynthesis from UDP-glucose and fructose- 6-phosphate. Involved in the regulation of carbon partitioning in the leaves of plants. May regulate the synthesis of sucrose and therefore play a major role as a limiting factor in the export of photoassimilates out of the leaf. Plays a role for sucrose availability that is essential for plant growth and fiber elongation. This is Probable sucrose-phosphate synthase 2 (SPS2) from Oryza sativa subsp. japonica (Rice).